A 92-amino-acid polypeptide reads, in one-letter code: Auxin-responsive protein SAUR28 (92 aa).

It belongs to the ARG7 family. In terms of tissue distribution, higher expression in thermo-responsive cultivars (e.g. cv. Alst-1, cv. Ang-0 and cv. Com-0) than in low thermo-responsive cultivars (e.g. cv. Dja-1, cv. El-0 and cv. Kon).

Its subcellular location is the cell membrane. Functions as a positive effector of cell expansion through modulation of auxin transport. Involved in thermo-responsiveness of plant architecture. Enhances plasma membrane H(+)-ATPase. In Arabidopsis thaliana (Mouse-ear cress), this protein is Auxin-responsive protein SAUR28.